A 378-amino-acid polypeptide reads, in one-letter code: Queuine tRNA-ribosyltransferase (378 aa).

The active-site Proton acceptor is Asp-90. Substrate contacts are provided by residues 90–94 (DSGGY), Asp-152, Gln-194, and Gly-223. Residues 254-260 (GVGKPED) are RNA binding. Asp-273 serves as the catalytic Nucleophile. The interval 278–282 (TRNAR) is RNA binding; important for wobble base 34 recognition. Residues Cys-311, Cys-313, Cys-316, and His-342 each coordinate Zn(2+).

The protein belongs to the queuine tRNA-ribosyltransferase family. Homodimer. Within each dimer, one monomer is responsible for RNA recognition and catalysis, while the other monomer binds to the replacement base PreQ1. Requires Zn(2+) as cofactor.

The catalysed reaction is 7-aminomethyl-7-carbaguanine + guanosine(34) in tRNA = 7-aminomethyl-7-carbaguanosine(34) in tRNA + guanine. It functions in the pathway tRNA modification; tRNA-queuosine biosynthesis. Functionally, catalyzes the base-exchange of a guanine (G) residue with the queuine precursor 7-aminomethyl-7-deazaguanine (PreQ1) at position 34 (anticodon wobble position) in tRNAs with GU(N) anticodons (tRNA-Asp, -Asn, -His and -Tyr). Catalysis occurs through a double-displacement mechanism. The nucleophile active site attacks the C1' of nucleotide 34 to detach the guanine base from the RNA, forming a covalent enzyme-RNA intermediate. The proton acceptor active site deprotonates the incoming PreQ1, allowing a nucleophilic attack on the C1' of the ribose to form the product. After dissociation, two additional enzymatic reactions on the tRNA convert PreQ1 to queuine (Q), resulting in the hypermodified nucleoside queuosine (7-(((4,5-cis-dihydroxy-2-cyclopenten-1-yl)amino)methyl)-7-deazaguanosine). The polypeptide is Queuine tRNA-ribosyltransferase (Aquifex aeolicus (strain VF5)).